A 500-amino-acid chain; its full sequence is L-arabinose isomerase (500 aa).

4 residues coordinate Mn(2+): Glu306, Glu333, His350, and His450.

Belongs to the arabinose isomerase family. As to quaternary structure, homohexamer. Mn(2+) is required as a cofactor.

It carries out the reaction beta-L-arabinopyranose = L-ribulose. It functions in the pathway carbohydrate degradation; L-arabinose degradation via L-ribulose; D-xylulose 5-phosphate from L-arabinose (bacterial route): step 1/3. Catalyzes the conversion of L-arabinose to L-ribulose. The sequence is that of L-arabinose isomerase from Salmonella choleraesuis (strain SC-B67).